A 253-amino-acid polypeptide reads, in one-letter code: Small ribosomal subunit protein uS2 (253 aa).

Ser2 carries the post-translational modification N-acetylserine. The interval 212–253 (QQAAEEAAAGEEDDEAKEEVAAEEQTEAADWAEGQSEEVASW) is disordered. Positions 219–238 (AAGEEDDEAKEEVAAEEQTE) are enriched in acidic residues.

The protein belongs to the universal ribosomal protein uS2 family. Component of the small ribosomal subunit. Mature ribosomes consist of a small (40S) and a large (60S) subunit. The 40S subunit contains about 33 different proteins and 1 molecule of RNA (18S). The 60S subunit contains about 49 different proteins and 3 molecules of RNA (25S, 5.8S and 5S). Interacts with RPS21.

It is found in the cytoplasm. Required for the assembly and/or stability of the 40S ribosomal subunit. Required for the processing of the 20S rRNA-precursor to mature 18S rRNA in a late step of the maturation of 40S ribosomal subunits. The protein is Small ribosomal subunit protein uS2 of Eremothecium gossypii (strain ATCC 10895 / CBS 109.51 / FGSC 9923 / NRRL Y-1056) (Yeast).